The sequence spans 243 residues: MKLVVGLGNPGPRYAGNRHNVGFMAVAALARRHGIGPFRRKFQAQVADGQIAGARLLLLAPETFMNASGQAVGEAARFHKIAPEDIIVLHDELDLAPGKIKVKQGGGAGGHNGIRDIEAHLGPAFWRVRLGIGHPGHKDRVLTYVLGDFAKAEEDWLAPMLDAVADHFALMLEGRPADFMSKVAAQTRPAEKAKPLATAKPKEGEARTSGGSVAEVGAPPPSPTGLAAALAEALDRKSQKGNG.

Residue Y14 participates in tRNA binding. Residue H19 is the Proton acceptor of the active site. 3 residues coordinate tRNA: F64, N66, and N112. The interval 184-225 is disordered; it reads AAQTRPAEKAKPLATAKPKEGEARTSGGSVAEVGAPPPSPTG. The segment covering 189–206 has biased composition (basic and acidic residues); it reads PAEKAKPLATAKPKEGEA.

Belongs to the PTH family. As to quaternary structure, monomer.

The protein resides in the cytoplasm. The enzyme catalyses an N-acyl-L-alpha-aminoacyl-tRNA + H2O = an N-acyl-L-amino acid + a tRNA + H(+). In terms of biological role, hydrolyzes ribosome-free peptidyl-tRNAs (with 1 or more amino acids incorporated), which drop off the ribosome during protein synthesis, or as a result of ribosome stalling. Catalyzes the release of premature peptidyl moieties from peptidyl-tRNA molecules trapped in stalled 50S ribosomal subunits, and thus maintains levels of free tRNAs and 50S ribosomes. This Rhodospirillum rubrum (strain ATCC 11170 / ATH 1.1.1 / DSM 467 / LMG 4362 / NCIMB 8255 / S1) protein is Peptidyl-tRNA hydrolase.